Reading from the N-terminus, the 175-residue chain is ATP synthase subunit delta (175 aa).

It belongs to the ATPase delta chain family. As to quaternary structure, F-type ATPases have 2 components, F(1) - the catalytic core - and F(0) - the membrane proton channel. F(1) has five subunits: alpha(3), beta(3), gamma(1), delta(1), epsilon(1). F(0) has three main subunits: a(1), b(2) and c(10-14). The alpha and beta chains form an alternating ring which encloses part of the gamma chain. F(1) is attached to F(0) by a central stalk formed by the gamma and epsilon chains, while a peripheral stalk is formed by the delta and b chains.

The protein localises to the cell membrane. In terms of biological role, f(1)F(0) ATP synthase produces ATP from ADP in the presence of a proton or sodium gradient. F-type ATPases consist of two structural domains, F(1) containing the extramembraneous catalytic core and F(0) containing the membrane proton channel, linked together by a central stalk and a peripheral stalk. During catalysis, ATP synthesis in the catalytic domain of F(1) is coupled via a rotary mechanism of the central stalk subunits to proton translocation. This protein is part of the stalk that links CF(0) to CF(1). It either transmits conformational changes from CF(0) to CF(1) or is implicated in proton conduction. The chain is ATP synthase subunit delta from Brevibacillus brevis (strain 47 / JCM 6285 / NBRC 100599).